Consider the following 535-residue polypeptide: Phosphoenolpyruvate carboxykinase (ATP) 1 (535 aa).

Substrate is bound by residues Arg58, Tyr193, and Lys199. Residues Lys199, His218, and 234-242 (GLSGTGKTT) contribute to the ATP site. Residues Lys199 and His218 each coordinate Mn(2+). Asp255 is a binding site for Mn(2+). ATP is bound by residues Glu283, Arg321, 440–441 (RI), and Thr446. Residue Arg321 coordinates substrate.

The protein belongs to the phosphoenolpyruvate carboxykinase (ATP) family. Requires Mn(2+) as cofactor.

The protein localises to the cytoplasm. It catalyses the reaction oxaloacetate + ATP = phosphoenolpyruvate + ADP + CO2. The protein operates within carbohydrate biosynthesis; gluconeogenesis. Functionally, involved in the gluconeogenesis. Catalyzes the conversion of oxaloacetate (OAA) to phosphoenolpyruvate (PEP) through direct phosphoryl transfer between the nucleoside triphosphate and OAA. The protein is Phosphoenolpyruvate carboxykinase (ATP) 1 of Salinibacter ruber (strain DSM 13855 / M31).